We begin with the raw amino-acid sequence, 662 residues long: MHLRGCACHLSLYCVYNDWENKIYRVPIFQCLFLEAETRSLKTFLIRGQSLDQESLNEIEVTRKETMLWDLQEQSNMMDKKIAAISSLIMNNGELLRKLSKFFVPLTVVLGDDGLEILEAYVCGEEPMLPLDTVPVILRCVGDYAALDTKHLLSNECTQASKKLRFGYSVMDFHFSLTVSDVKICFSHTDTGEAVCEKMKQIFYFSVCAFGGEQVLLVTPKNAYALLFDDDLCLLLLQSVFAFLHEKIFAVYKQVLVQLCEYIGPDLWPFGNERSVSFIGYPNLWLLSVSDLERRVPDTTYICREILSFCGLAPILGPRGRHAIPVIRELSVEMPGSETSLQRFRFNSQYVSSESLCFQTGPEDTHLFFSDSDMYVVTLPDCLRLLLKSTVPRAFLPCFDENATEIELLLKFMSRLQHRSYALFDAVIFMLDAFVSAFQRACTLMEMRWLLVRDLHVFYLTCDGKDSHVVMPLLQTAVENCWEKITEIKQRPAFQCMEISRCGFVFYARFFLSSGLSQSKEAHWTVTASKYLSACIRANKTGLCFASITVYFQDMMCVFIANRYNVSYWIEEFDPNDYCLEYHEGLLDCSRYTAVMSEDGQLVRQARGIALTDKINFSYYILVTLRVLRRWVESKFEDVEQAEFIRWENRMLYEHIHLLHLN.

This sequence belongs to the herpesviridae HEPA family. In terms of assembly, associates with the primase and the helicase to form the helicase-primase complex. Interacts with the origin-binding protein. Interacts with the polymerase catalytic subunit.

It localises to the host nucleus. Functionally, component of the helicase/primase complex. Unwinds the DNA at the replication forks and generates single-stranded DNA for both leading and lagging strand synthesis. The primase synthesizes short RNA primers on the lagging strand that the polymerase presumably elongates using dNTPs. The primase-associated factor has no known catalytic activity in the complex and may serve to facilitate the formation of the replisome by directly interacting with the origin-binding protein and the polymerase. The chain is DNA helicase/primase complex-associated protein (U74) from Human herpesvirus 6B (strain Z29) (HHV-6 variant B).